We begin with the raw amino-acid sequence, 779 residues long: Potassium/sodium hyperpolarization-activated cyclic nucleotide-gated channel 3 (779 aa).

The tract at residues 1–47 is disordered; that stretch reads MEEEARPAAGAGEAATPARETPPAAPAQARAASGGVPESAPEPKRRQ. At 1–96 the chain is on the cytoplasmic side; the sequence is MEEEARPAAG…PYSDFRFYWD (96 aa). Positions 7–32 are enriched in low complexity; the sequence is PAAGAGEAATPARETPPAAPAQARAA. The involved in subunit assembly stretch occupies residues 45-90; the sequence is RRQLGTLLQPTVNKFSLRVFGSHKAVEIEQERVKSAGAWIIHPYSD. Residues 97–117 form a helical membrane-spanning segment; the sequence is LIMLLLMVGNLIVLPVGITFF. The Extracellular portion of the chain corresponds to 118 to 123; sequence KEENSP. The chain crosses the membrane as a helical span at residues 124-144; that stretch reads PWIVFNVLSDTFFLLDLVLNF. Residues 145 to 170 are Cytoplasmic-facing; that stretch reads RTGIVVEEGAEILLAPRAIRTRYLRT. Residues 171–191 traverse the membrane as a helical segment; the sequence is WFLVDLISSIPVDYIFLVVEL. The Extracellular portion of the chain corresponds to 192 to 200; that stretch reads EPRLDAEVY. A helical; Voltage-sensor transmembrane segment spans residues 201-221; that stretch reads KTARALRIVRFTKILSLLRLL. The Cytoplasmic segment spans residues 222–252; it reads RLSRLIRYIHQWEEIFHMTYDLASAVVRIFN. The chain crosses the membrane as a helical span at residues 253–273; sequence LIGMMLLLCHWDGCLQFLVPM. Topologically, residues 274-296 are extracellular; sequence LQDFPSDCWVSMNRMVNHSWGRQ. Asn-290 carries N-linked (GlcNAc...) asparagine glycosylation. The pore-forming intramembrane region spans 297-318; it reads YSHALFKAMSHMLCIGYGQQAP. Over 319-328 the chain is Extracellular; sequence VGMPDVWLTM. A helical membrane pass occupies residues 329–349; it reads LSMIVGATCYAMFIGHATALI. The Cytoplasmic portion of the chain corresponds to 350–779; the sequence is QSLDSSRRQY…PRGPQISANM (430 aa). The interval 353 to 779 is interaction with KCTD3; sequence DSSRRQYQEK…PRGPQISANM (427 aa). 3',5'-cyclic AMP-binding residues include Gly-491, Glu-492, Cys-494, Arg-501, Thr-502, Arg-542, and Arg-545. Positions 549–569 are disordered; the sequence is KNSILQRKRSEPSPGSSGGVM. Ser-633 bears the Phosphoserine mark. The span at 687–697 shows a compositional bias: polar residues; sequence SLSRTGRSQVS. Residues 687 to 779 are disordered; that stretch reads SLSRTGRSQV…PRGPQISANM (93 aa).

Belongs to the potassium channel HCN family. In terms of assembly, homotetramer. The potassium channel is composed of a homo- or heterotetrameric complex of pore-forming subunits. Interacts with HCN1. Interacts with KCTD3; this interaction increases cell surface expression and current density of this channel. Interacts with PEX5L. In terms of tissue distribution, detected in hypothalamus, amygdala, olfactory bulb, hippocampus and retina (at protein level). Highly expressed in brain and heart, in particular in ventricle, atrium and in sinoatrial node (SAN). Detected at low levels in skeletal muscle and lung. Expressed in DRG neurons.

Its subcellular location is the cell membrane. The catalysed reaction is K(+)(in) = K(+)(out). It carries out the reaction Na(+)(in) = Na(+)(out). Unlike HCN2 and HCN4, HCN3 is insensitive to cyclic nucleotides, such as cAMP or cGMP. This lack of sensitivity of HCN3, despite harboring a functional cyclic nucleotide-binding domain (CNBD), may be explained by its shorter C-terminal sequence, which may alter the normal autoinhibition of the channel. Inhibited by Cs(1+) and ivabradine. Phosphatidylinositol-4,5-bisphosphate (PIP(2)) shifts HCN3 activation to more depolarized potentials and accelerated activation kinetics. Its function is as follows. Hyperpolarization-activated ion channel that are permeable to sodium and potassium ions, with an about 3:1 preference for potassium ions. Contributes to the native pacemaker currents in heart (If) and in neurons (Ih). In particular, plays a pivotal role in maintaining excitability and promoting rhythmic burst firing within hypothalamic nuclei. Exerts a significant influence on the configuration of the cardiac action potential waveform. Does not appear to play a prominent role in the processing of acute, neuropathic, or inflammatory pain. The polypeptide is Potassium/sodium hyperpolarization-activated cyclic nucleotide-gated channel 3 (Hcn3) (Mus musculus (Mouse)).